The chain runs to 72 residues: Translation initiation factor IF-1 2 (72 aa).

The region spanning 1-72 is the S1-like domain; the sequence is MAKDDVIQMQ…SRARIVFRTK (72 aa).

Belongs to the IF-1 family. Component of the 30S ribosomal translation pre-initiation complex which assembles on the 30S ribosome in the order IF-2 and IF-3, IF-1 and N-formylmethionyl-tRNA(fMet); mRNA recruitment can occur at any time during PIC assembly.

The protein resides in the cytoplasm. Its function is as follows. One of the essential components for the initiation of protein synthesis. Stabilizes the binding of IF-2 and IF-3 on the 30S subunit to which N-formylmethionyl-tRNA(fMet) subsequently binds. Helps modulate mRNA selection, yielding the 30S pre-initiation complex (PIC). Upon addition of the 50S ribosomal subunit IF-1, IF-2 and IF-3 are released leaving the mature 70S translation initiation complex. The protein is Translation initiation factor IF-1 2 of Cupriavidus necator (strain ATCC 17699 / DSM 428 / KCTC 22496 / NCIMB 10442 / H16 / Stanier 337) (Ralstonia eutropha).